An 892-amino-acid chain; its full sequence is von Willebrand factor A domain-containing protein 7 (892 aa).

Positions Met-1–Ala-27 are cleaved as a signal peptide. Residue Asn-54 is glycosylated (N-linked (GlcNAc...) asparagine). Positions Tyr-231–Pro-272 are disordered. The region spanning Ala-313–Gly-495 is the VWFA domain.

It localises to the secreted. This is von Willebrand factor A domain-containing protein 7 (Vwa7) from Rattus norvegicus (Rat).